A 407-amino-acid polypeptide reads, in one-letter code: MNRLYVGSEVGQLRRVLLNRPERALTHLTPSNCHELLFDDVLAVEAAGVEHDAFANTLRTQDVEVLLLHDLLEETLAIPEARQWLLNTQISDFRFGPTFARELRHALNHLDDHHLTTLLLGGLAFSELHLESDSMLPKMRQPLDFVIEPLPNHLFTRDTSCWVYGGVSLNPMMKPARQRETNHLRAIYRWHPIFAQHPFIHYFGIDDLHYDNANIEGGDVLVIGKGAVLIGMSERTSPQGVENLAAALFKHGQASKVIAINLPKHRSCMHLDTVMTHMDVDTFSVYPEVMRKDLPTWRLTPKGNNGDMRVEQVPSYLHAIEQALGVDYLKIITTGGNSYEAEREQWNDANNVLTVKPGVVIGYERNVYTNEKYDKAGIKVLTIPGNELGRGRGGARCMSCPIERDGI.

Cys397 (amidino-cysteine intermediate) is an active-site residue.

The protein belongs to the arginine deiminase family.

Its subcellular location is the cytoplasm. It carries out the reaction L-arginine + H2O = L-citrulline + NH4(+). It participates in amino-acid degradation; L-arginine degradation via ADI pathway; carbamoyl phosphate from L-arginine: step 1/2. This Vibrio cholerae serotype O1 (strain ATCC 39541 / Classical Ogawa 395 / O395) protein is Arginine deiminase.